The primary structure comprises 385 residues: Queuine tRNA-ribosyltransferase (385 aa).

Asp93 functions as the Proton acceptor in the catalytic mechanism. Substrate contacts are provided by residues 93 to 97 (DSGGF), Asp147, Gln191, and Gly218. The tract at residues 249 to 255 (GVGKPED) is RNA binding. Asp268 (nucleophile) is an active-site residue. The interval 273–277 (TRNAR) is RNA binding; important for wobble base 34 recognition. Zn(2+)-binding residues include Cys306, Cys308, Cys311, and His337.

Belongs to the queuine tRNA-ribosyltransferase family. Homodimer. Within each dimer, one monomer is responsible for RNA recognition and catalysis, while the other monomer binds to the replacement base PreQ1. Zn(2+) serves as cofactor.

It catalyses the reaction 7-aminomethyl-7-carbaguanine + guanosine(34) in tRNA = 7-aminomethyl-7-carbaguanosine(34) in tRNA + guanine. It functions in the pathway tRNA modification; tRNA-queuosine biosynthesis. In terms of biological role, catalyzes the base-exchange of a guanine (G) residue with the queuine precursor 7-aminomethyl-7-deazaguanine (PreQ1) at position 34 (anticodon wobble position) in tRNAs with GU(N) anticodons (tRNA-Asp, -Asn, -His and -Tyr). Catalysis occurs through a double-displacement mechanism. The nucleophile active site attacks the C1' of nucleotide 34 to detach the guanine base from the RNA, forming a covalent enzyme-RNA intermediate. The proton acceptor active site deprotonates the incoming PreQ1, allowing a nucleophilic attack on the C1' of the ribose to form the product. After dissociation, two additional enzymatic reactions on the tRNA convert PreQ1 to queuine (Q), resulting in the hypermodified nucleoside queuosine (7-(((4,5-cis-dihydroxy-2-cyclopenten-1-yl)amino)methyl)-7-deazaguanosine). The protein is Queuine tRNA-ribosyltransferase of Pasteurella multocida (strain Pm70).